A 302-amino-acid polypeptide reads, in one-letter code: NmrA-like family domain-containing protein DDB_G0286605 (302 aa).

NADP(+)-binding positions include 9 to 14, 35 to 39, 56 to 57, 78 to 80, K130, and 157 to 160; these read GGTGYQ, RNPES, DE, TNS, and YFQN.

This sequence belongs to the NmrA-type oxidoreductase family.

Functionally, may be a redox sensor protein. This is NmrA-like family domain-containing protein DDB_G0286605 from Dictyostelium discoideum (Social amoeba).